Here is an 803-residue protein sequence, read N- to C-terminus: Translation initiation factor IF-2 (803 aa).

Disordered regions lie at residues 95-125 (PVVE…EKAE) and 138-178 (EVKE…EREE). Over residues 111–121 (VPLTSDTTNLN) the composition is skewed to polar residues. Over residues 138–155 (EVKEEAKKTPSEKKETPK) the composition is skewed to basic and acidic residues. A compositionally biased stretch (basic residues) spans 156-167 (KGPRKETRRSRK). A compositionally biased stretch (basic and acidic residues) spans 168-178 (PDKEDKWEREE). One can recognise a tr-type G domain in the interval 302–471 (PRAPVVTIMG…LLQAEVLELK (170 aa)). The tract at residues 311 to 318 (GHVDHGKT) is G1. 311–318 (GHVDHGKT) is a binding site for GTP. The segment at 336-340 (GITQH) is G2. Positions 357–360 (DTPG) are G3. Residues 357–361 (DTPGH) and 411–414 (NKID) each bind GTP. Residues 411-414 (NKID) are G4. Residues 447-449 (SAK) are G5.

The protein belongs to the TRAFAC class translation factor GTPase superfamily. Classic translation factor GTPase family. IF-2 subfamily.

The protein resides in the cytoplasm. Its function is as follows. One of the essential components for the initiation of protein synthesis. Protects formylmethionyl-tRNA from spontaneous hydrolysis and promotes its binding to the 30S ribosomal subunits. Also involved in the hydrolysis of GTP during the formation of the 70S ribosomal complex. This Coxiella burnetii (strain RSA 331 / Henzerling II) protein is Translation initiation factor IF-2.